The primary structure comprises 400 residues: Diphosphomevalonate decarboxylase (400 aa).

(R)-5-diphosphomevalonate-binding positions include 19–22 (YWGK), arginine 75, 154–159 (SGSACR), and threonine 210. A disordered region spans residues 381–400 (DGPRTLGPEEALLSPDGLPK).

Belongs to the diphosphomevalonate decarboxylase family.

It carries out the reaction (R)-5-diphosphomevalonate + ATP = isopentenyl diphosphate + ADP + phosphate + CO2. It functions in the pathway isoprenoid biosynthesis; isopentenyl diphosphate biosynthesis via mevalonate pathway; isopentenyl diphosphate from (R)-mevalonate: step 3/3. Functionally, diphosphomevalonate decarboxylase; part of the second module of ergosterol biosynthesis pathway that includes the middle steps of the pathway. The second module involves the formation of farnesyl diphosphate, which is also an important intermediate in the biosynthesis of ubiquinone, dolichol, heme and prenylated proteins. This module also plays a key role in the biosynthesis of triterpenes such as ganoderic acids (GA), a group of highly oxygenated lanostane-type triterpenoids which are well recognized as a main group of unique bioactive compounds in the medicinal mushroom Ganoderma lucidum. Activity by the mevalonate kinase first converts mevalonate into 5-phosphomevalonate. 5-phosphomevalonate is then further converted to 5-diphosphomevalonate by the phosphomevalonate kinase. The diphosphomevalonate decarboxylase MVD then produces isopentenyl diphosphate. The isopentenyl-diphosphate delta-isomerase then catalyzes the 1,3-allylic rearrangement of the homoallylic substrate isopentenyl (IPP) to its highly electrophilic allylic isomer, dimethylallyl diphosphate (DMAPP). Finally the farnesyl diphosphate synthase FPS catalyzes the sequential condensation of isopentenyl pyrophosphate with dimethylallyl pyrophosphate, and then with the resultant geranylpyrophosphate to the ultimate product farnesyl pyrophosphate. The polypeptide is Diphosphomevalonate decarboxylase (Ganoderma lucidum (Ling zhi medicinal fungus)).